The sequence spans 186 residues: MGKTSQRKQCDCENPSKPCLSTSIPLRMSSYTFKRPVTKITSHLGNEVRYYQWEETLEKPEQACWQKRLQGLQAYSSAGELLSTSDLAKTLKDLTSTDTVASASDTQATSIDITSVPTLESSSHLANMIPEAGPQILCKEFLVTEQDIINQERKVKIARERLAVALIAHKLASEMETVRGSRKANL.

The tract at residues 1–104 is transcription repressor; sequence MGKTSQRKQC…TSTDTVASAS (104 aa).

This sequence belongs to the MBD3L family. As to expression, highly expressed in testis. Not detected in the other tissues tested.

It is found in the nucleus. Functionally, transcriptional repressor. This chain is Methyl-CpG-binding domain protein 3-like 1 (Mbd3l1), found in Mus musculus (Mouse).